The primary structure comprises 113 residues: Carrot ABA-induced in somatic embryos 3 (113 aa).

3 stretches are compositionally biased toward basic and acidic residues: residues 1–17, 32–52, and 65–77; these read MASGQEKRSELDARAKQ, EAQEHLAEGRSKGGHTRKEQL, and GETRREQMGKEGY. The interval 1 to 113 is disordered; sequence MASGQEKRSE…IDQSKFRTKS (113 aa).

Belongs to the small hydrophilic plant seed protein family. As to expression, expressed in embryogenic cells, somatic embryos and seeds at the later stages of development. Not detected in leaves.

The chain is Carrot ABA-induced in somatic embryos 3 from Daucus carota (Wild carrot).